The chain runs to 278 residues: Extracellular metalloprotease MCYG_03238 (278 aa).

The N-terminal stretch at 1 to 19 (MRFSIVLSSIAALSSVAAA) is a signal peptide. Asn52 is a glycosylation site (N-linked (GlcNAc...) asparagine). Position 170 (His170) interacts with Zn(2+). The active site involves Glu171. Zn(2+) is bound at residue His174. A disulfide bridge connects residues Cys209 and Cys255.

This sequence belongs to the peptidase M43B family.

Its subcellular location is the secreted. Functionally, secreted metalloproteinase that allows assimilation of proteinaceous substrates. Plays a pivotal role as a pathogenicity determinant during infections and contributes to the ability of the pathogen to persist within the mammalian host. The polypeptide is Extracellular metalloprotease MCYG_03238 (Arthroderma otae (strain ATCC MYA-4605 / CBS 113480) (Microsporum canis)).